Consider the following 267-residue polypeptide: 4-hydroxy-tetrahydrodipicolinate reductase (267 aa).

NAD(+) is bound by residues 9–14 (GASGRM) and Asp35. Arg36 lines the NADP(+) pocket. NAD(+)-binding positions include 98–100 (GTT) and 122–125 (ASNF). The Proton donor/acceptor role is filled by His155. His156 is a binding site for (S)-2,3,4,5-tetrahydrodipicolinate. Lys159 functions as the Proton donor in the catalytic mechanism. 165–166 (GT) serves as a coordination point for (S)-2,3,4,5-tetrahydrodipicolinate.

It belongs to the DapB family.

Its subcellular location is the cytoplasm. The enzyme catalyses (S)-2,3,4,5-tetrahydrodipicolinate + NAD(+) + H2O = (2S,4S)-4-hydroxy-2,3,4,5-tetrahydrodipicolinate + NADH + H(+). It catalyses the reaction (S)-2,3,4,5-tetrahydrodipicolinate + NADP(+) + H2O = (2S,4S)-4-hydroxy-2,3,4,5-tetrahydrodipicolinate + NADPH + H(+). It participates in amino-acid biosynthesis; L-lysine biosynthesis via DAP pathway; (S)-tetrahydrodipicolinate from L-aspartate: step 4/4. Catalyzes the conversion of 4-hydroxy-tetrahydrodipicolinate (HTPA) to tetrahydrodipicolinate. The polypeptide is 4-hydroxy-tetrahydrodipicolinate reductase (Chromobacterium violaceum (strain ATCC 12472 / DSM 30191 / JCM 1249 / CCUG 213 / NBRC 12614 / NCIMB 9131 / NCTC 9757 / MK)).